Reading from the N-terminus, the 366-residue chain is MSAPLKRTPLAEEHLAAGARMVDFGGWDMPLAYGSQLEEHHAVRQDAGMFDVSHMLNVDVGGADATAFLRRLVANDVARLATPGRALYSCMLNPQGGIIDDLIIYYFAPDQWRVVVNAGTADKDIAWMQRVAAADGFDVAIAPRRDLAMVAVQGPNARAKVWAARPAWQAASEPLAPFSAAAVEAGTLVARTGYTGEDGFEIVLPADAVVQLWRDLLAQGVRPCGLGARDTLRLEAGMNLYGQDMDELVHPDQAGLSWTVALKDEARRFVGRDAIEQFAVPRAFVGLKLQERGVMRAHMPVRCAQGMGELTSGTMSPTLGVSVGFARVPVGVQPGDAVEVEIRGKWVPALVCKLPFVRHGKAVEHS.

Belongs to the GcvT family. In terms of assembly, the glycine cleavage system is composed of four proteins: P, T, L and H.

It carries out the reaction N(6)-[(R)-S(8)-aminomethyldihydrolipoyl]-L-lysyl-[protein] + (6S)-5,6,7,8-tetrahydrofolate = N(6)-[(R)-dihydrolipoyl]-L-lysyl-[protein] + (6R)-5,10-methylene-5,6,7,8-tetrahydrofolate + NH4(+). In terms of biological role, the glycine cleavage system catalyzes the degradation of glycine. The chain is Aminomethyltransferase from Bordetella parapertussis (strain 12822 / ATCC BAA-587 / NCTC 13253).